The following is a 156-amino-acid chain: Large ribosomal subunit protein uL15 (156 aa).

The disordered stretch occupies residues 29 to 48; that stretch reads CGKGKTSGRGHKGQKARSGV. Residues 34 to 43 show a composition bias toward basic residues; that stretch reads TSGRGHKGQK.

It belongs to the universal ribosomal protein uL15 family. Part of the 50S ribosomal subunit.

Binds to the 23S rRNA. The sequence is that of Large ribosomal subunit protein uL15 from Ehrlichia chaffeensis (strain ATCC CRL-10679 / Arkansas).